Consider the following 363-residue polypeptide: Protein-glutamate methylesterase/protein-glutamine glutaminase of group 3 operon (363 aa).

The Response regulatory domain occupies 7–124 (RVLIVDDSAS…RQALMESSGR (118 aa)). Asp-58 bears the 4-aspartylphosphate mark. Residues 166–357 (PTTERIVCIG…REIMAWQQAK (192 aa)) enclose the CheB-type methylesterase domain. Active-site residues include Ser-177, His-203, and Asp-299.

The protein belongs to the CheB family. Phosphorylated by CheA. Phosphorylation of the N-terminal regulatory domain activates the methylesterase activity.

It localises to the cytoplasm. It carries out the reaction [protein]-L-glutamate 5-O-methyl ester + H2O = L-glutamyl-[protein] + methanol + H(+). It catalyses the reaction L-glutaminyl-[protein] + H2O = L-glutamyl-[protein] + NH4(+). In terms of biological role, involved in chemotaxis. Part of a chemotaxis signal transduction system that modulates chemotaxis in response to various stimuli. Catalyzes the demethylation of specific methylglutamate residues introduced into the chemoreceptors (methyl-accepting chemotaxis proteins or MCP) by CheR. Also mediates the irreversible deamidation of specific glutamine residues to glutamic acid. The chain is Protein-glutamate methylesterase/protein-glutamine glutaminase of group 3 operon from Rhodopseudomonas palustris (strain ATCC BAA-98 / CGA009).